A 219-amino-acid polypeptide reads, in one-letter code: Small ribosomal subunit protein uS3 (219 aa).

The 69-residue stretch at 38–106 (IREYINVRLK…RVHINILEVK (69 aa)) folds into the KH type-2 domain.

This sequence belongs to the universal ribosomal protein uS3 family. As to quaternary structure, part of the 30S ribosomal subunit. Forms a tight complex with proteins S10 and S14.

Its function is as follows. Binds the lower part of the 30S subunit head. Binds mRNA in the 70S ribosome, positioning it for translation. The sequence is that of Small ribosomal subunit protein uS3 from Bacillus thuringiensis (strain Al Hakam).